A 210-amino-acid polypeptide reads, in one-letter code: Keratin-associated protein 26-1 (210 aa).

The protein belongs to the PMG family. In terms of assembly, interacts with hair keratins. Localized high up in the well differentiated portion of the hair follicle cuticle (about 10-15 cell layers above the apex of the dermal papilla).

Its function is as follows. In the hair cortex, hair keratin intermediate filaments are embedded in an interfilamentous matrix, consisting of hair keratin-associated proteins (KRTAP), which are essential for the formation of a rigid and resistant hair shaft through their extensive disulfide bond cross-linking with abundant cysteine residues of hair keratins. The matrix proteins include the high-sulfur and high-glycine-tyrosine keratins. The polypeptide is Keratin-associated protein 26-1 (KRTAP26-1) (Homo sapiens (Human)).